The primary structure comprises 284 residues: 4-diphosphocytidyl-2-C-methyl-D-erythritol kinase (284 aa).

Lysine 14 is an active-site residue. 98–108 (PMGGGLGGGSS) is an ATP binding site. Residue aspartate 140 is part of the active site.

Belongs to the GHMP kinase family. IspE subfamily.

It carries out the reaction 4-CDP-2-C-methyl-D-erythritol + ATP = 4-CDP-2-C-methyl-D-erythritol 2-phosphate + ADP + H(+). The protein operates within isoprenoid biosynthesis; isopentenyl diphosphate biosynthesis via DXP pathway; isopentenyl diphosphate from 1-deoxy-D-xylulose 5-phosphate: step 3/6. Functionally, catalyzes the phosphorylation of the position 2 hydroxy group of 4-diphosphocytidyl-2C-methyl-D-erythritol. The polypeptide is 4-diphosphocytidyl-2-C-methyl-D-erythritol kinase (Shewanella denitrificans (strain OS217 / ATCC BAA-1090 / DSM 15013)).